The sequence spans 520 residues: 3-phosphoshikimate 1-carboxyvinyltransferase, chloroplastic (520 aa).

The transit peptide at Met-1 to Glu-76 directs the protein to the chloroplast. Positions 99, 100, and 104 each coordinate 3-phosphoshikimate. Lys-99 is a binding site for phosphoenolpyruvate. Phosphoenolpyruvate is bound by residues Gly-177 and Arg-207. Positions 254, 255, 256, 282, 407, and 434 each coordinate 3-phosphoshikimate. Gln-256 lines the phosphoenolpyruvate pocket. Asp-407 functions as the Proton acceptor in the catalytic mechanism. Residues Arg-438, Arg-480, and Lys-505 each contribute to the phosphoenolpyruvate site.

It belongs to the EPSP synthase family.

The protein resides in the plastid. It is found in the chloroplast. It carries out the reaction 3-phosphoshikimate + phosphoenolpyruvate = 5-O-(1-carboxyvinyl)-3-phosphoshikimate + phosphate. It participates in metabolic intermediate biosynthesis; chorismate biosynthesis; chorismate from D-erythrose 4-phosphate and phosphoenolpyruvate: step 6/7. Functionally, catalyzes the transfer of the enolpyruvyl moiety of phosphoenolpyruvate (PEP) to the 5-hydroxyl of shikimate-3-phosphate (S3P) to produce enolpyruvyl shikimate-3-phosphate and inorganic phosphate. The chain is 3-phosphoshikimate 1-carboxyvinyltransferase, chloroplastic from Solanum lycopersicum (Tomato).